A 217-amino-acid chain; its full sequence is Insulin-like growth factor 2.S (217 aa).

The signal sequence occupies residues 1–56 (MEQLSCKHRSSSVEAEAQLCRQTESRSTQLPRMSVMRHLFLLSITFLVYTLDSAKA). Residues 57–83 (YRATETLCGGELVDTLQFVCGDRGFYF) form a b region. 3 cysteine pairs are disulfide-bonded: Cys64–Cys103, Cys76–Cys116, and Cys102–Cys107. The segment at 84–96 (STNNGRSNRRPNR) is c. Residues 97 to 117 (GIVDVCCFKSCDLELLETYCA) are a. The segment at 118-123 (KPTKNE) is d. A propeptide spans 124 to 217 (RDVSTAPATA…LQQASEPSHN (94 aa)) (e peptide).

It belongs to the insulin family.

It localises to the secreted. The insulin-like growth factors, isolated from plasma, are structurally and functionally related to insulin but have a much higher growth-promoting activity. Promotes anterior neural development. Acts as a ligand for integrin which is required for IGF2 signaling. This chain is Insulin-like growth factor 2.S, found in Xenopus laevis (African clawed frog).